The sequence spans 608 residues: Altered inheritance of mitochondria protein 9, mitochondrial (608 aa).

The transit peptide at 1–21 (MLRRIVNTGTKRLFRVPPRSS) directs the protein to the mitochondrion.

The protein belongs to the AIM9 family.

The protein resides in the mitochondrion. This chain is Altered inheritance of mitochondria protein 9, mitochondrial (AIM9), found in Clavispora lusitaniae (strain ATCC 42720) (Yeast).